Consider the following 128-residue polypeptide: Kinetoplast-associated protein 4 (128 aa).

A propeptide spanning residues 1 to 10 is cleaved from the precursor; it reads MLRFVPRRLA. Positions 60-87 are disordered; the sequence is AHPGFKRKEKEPKELKAAKAAKTSTPRA. Over residues 65-76 the composition is skewed to basic and acidic residues; the sequence is KRKEKEPKELKA.

This sequence belongs to the KAP family. In terms of assembly, associates with the kinetoplast DNA network.

Its subcellular location is the mitochondrion matrix. It is found in the kinetoplast. In terms of biological role, histone H1-like DNA-binding protein involved in the organization and segregation of kinetoplast DNA (kDNA). The mitochondrial DNA of kinetoplastid protozoa consists of about 5,000 minicircles and 20 to 30 maxicircles. These circular DNAs are held together by catenation into a highly organized compact disk structure referred to as a kinetoplast DNA (kDNA) network. Binds preferentially to a specific fragment of minicircle DNA and is able to compact kDNA networks through DNA charge neutralization and condensation. The polypeptide is Kinetoplast-associated protein 4 (KAP4) (Crithidia fasciculata).